The chain runs to 160 residues: Cytochrome b6-f complex subunit 4 (160 aa).

Transmembrane regions (helical) follow at residues 36 to 56 (LLYI…GLAV), 68 to 88 (PFAT…FQIL), 95 to 115 (FFGV…PFLE), and 131 to 151 (SVFL…VLPI).

The protein belongs to the cytochrome b family. PetD subfamily. The 4 large subunits of the cytochrome b6-f complex are cytochrome b6, subunit IV (17 kDa polypeptide, petD), cytochrome f and the Rieske protein, while the 4 small subunits are petG, petL, petM and petN. The complex functions as a dimer.

The protein localises to the plastid. The protein resides in the chloroplast thylakoid membrane. In terms of biological role, component of the cytochrome b6-f complex, which mediates electron transfer between photosystem II (PSII) and photosystem I (PSI), cyclic electron flow around PSI, and state transitions. This chain is Cytochrome b6-f complex subunit 4, found in Welwitschia mirabilis (Tree tumbo).